The following is a 75-amino-acid chain: Small ribosomal subunit protein bS18 (75 aa).

It belongs to the bacterial ribosomal protein bS18 family. In terms of assembly, part of the 30S ribosomal subunit. Forms a tight heterodimer with protein bS6.

In terms of biological role, binds as a heterodimer with protein bS6 to the central domain of the 16S rRNA, where it helps stabilize the platform of the 30S subunit. The chain is Small ribosomal subunit protein bS18 from Thermosipho melanesiensis (strain DSM 12029 / CIP 104789 / BI429).